A 151-amino-acid chain; its full sequence is Small ribosomal subunit protein uS9 (151 aa).

Belongs to the universal ribosomal protein uS9 family.

The chain is Small ribosomal subunit protein uS9 (RpS16) from Spodoptera frugiperda (Fall armyworm).